A 290-amino-acid chain; its full sequence is ATP synthase gamma chain (290 aa).

Belongs to the ATPase gamma chain family. As to quaternary structure, F-type ATPases have 2 components, CF(1) - the catalytic core - and CF(0) - the membrane proton channel. CF(1) has five subunits: alpha(3), beta(3), gamma(1), delta(1), epsilon(1). CF(0) has three main subunits: a, b and c.

The protein resides in the cell inner membrane. Its function is as follows. Produces ATP from ADP in the presence of a proton gradient across the membrane. The gamma chain is believed to be important in regulating ATPase activity and the flow of protons through the CF(0) complex. This is ATP synthase gamma chain from Gemmatimonas aurantiaca (strain DSM 14586 / JCM 11422 / NBRC 100505 / T-27).